A 167-amino-acid chain; its full sequence is Peptidyl-prolyl cis-trans isomerase-like 3 (167 aa).

Residues 1 to 153 (MSVTLHTNLG…QEIKLLNVTV (153 aa)) form the PPIase cyclophilin-type domain.

The protein belongs to the cyclophilin-type PPIase family. PPIL3 subfamily.

It carries out the reaction [protein]-peptidylproline (omega=180) = [protein]-peptidylproline (omega=0). PPIases accelerate the folding of proteins. It catalyzes the cis-trans isomerization of proline imidic peptide bonds in oligopeptides. The sequence is that of Peptidyl-prolyl cis-trans isomerase-like 3 (CYP10) from Cryptococcus neoformans var. neoformans serotype D (strain B-3501A) (Filobasidiella neoformans).